Reading from the N-terminus, the 288-residue chain is G1/S-specific cyclin-D2 (288 aa).

The Cyclin N-terminal domain occupies 26-151 (VLQNLLTIEE…VVLGKLKWNL (126 aa)). The segment at 264 to 288 (DQDGSKSEDELDQASTPTDVRDIDL) is disordered. Residue serine 270 is modified to Phosphoserine. Threonine 279 is subject to Phosphothreonine.

It belongs to the cyclin family. Cyclin D subfamily. In terms of assembly, interacts with either CDK4 or CDK6 protein kinase to form a serine/threonine kinase holoenzyme complex. The cyclin subunit imparts substrate specificity to the complex. Post-translationally, phosphorylation at Thr-279 by MAP kinases is required for ubiquitination and degradation by the DCX(AMBRA1) complex. In terms of processing, ubiquitinated by the DCX(AMBRA1) complex during the transition from G1 to S cell phase, leading to its degradation: ubiquitination is dependent on Thr-279 phosphorylation. The DCX(AMBRA1) complex represents the major regulator of CCND2 stability during the G1/S transition. Polyubiquitinated by the SCF(FBXL2) complex, leading to proteasomal degradation.

Its subcellular location is the nucleus. It is found in the cytoplasm. The protein localises to the nucleus membrane. Its function is as follows. Regulatory component of the cyclin D2-CDK4 (DC) complex that phosphorylates and inhibits members of the retinoblastoma (RB) protein family including RB1 and regulates the cell-cycle during G(1)/S transition. Phosphorylation of RB1 allows dissociation of the transcription factor E2F from the RB/E2F complex and the subsequent transcription of E2F target genes which are responsible for the progression through the G(1) phase. Hypophosphorylates RB1 in early G(1) phase. Cyclin D-CDK4 complexes are major integrators of various mitogenenic and antimitogenic signals. The chain is G1/S-specific cyclin-D2 (CCND2) from Sus scrofa (Pig).